The sequence spans 525 residues: Rho guanine nucleotide exchange factor gef3 (525 aa).

Positions 72 to 268 constitute a DH domain; it reads AIISVLEEFR…EIASQRMNEL (197 aa).

The protein localises to the cytoplasm. Functionally, has a role in the control of cell polarity and cytokinesis. Involved in bipolar growth and septum formation. The polypeptide is Rho guanine nucleotide exchange factor gef3 (gef3) (Schizosaccharomyces pombe (strain 972 / ATCC 24843) (Fission yeast)).